We begin with the raw amino-acid sequence, 1183 residues long: Peroxisomal ATPase PEX6 (1183 aa).

The segment at 161 to 205 (ESRGKKTGEPEDGPLANGIDLNGVDDSDSDEDVLSQGDDDDENNV) is disordered. Over residues 183–204 (GVDDSDSDEDVLSQGDDDDENN) the composition is skewed to acidic residues. Positions 576 to 785 (LPNNYISPVH…VERAMTACSE (210 aa)) are AAA-cassette D1. Positions 878 to 1070 (GILFYGPPGT…CSDAMLKAIT (193 aa)) are AAA-cassette D2. 883–890 (GPPGTGKT) contacts ATP. The interval 1160–1183 (IMVDGPGTGGEGAFGDDGDEEGLY) is disordered. Acidic residues predominate over residues 1173–1183 (FGDDGDEEGLY).

Belongs to the AAA ATPase family. In terms of assembly, interacts with PEX1; forming the PEX1-PEX6 AAA ATPase complex, which is composed of a heterohexamer formed by a trimer of PEX1-PEX6 dimers.

Its subcellular location is the cytoplasm. The protein localises to the cytosol. The protein resides in the peroxisome membrane. The catalysed reaction is ATP + H2O = ADP + phosphate + H(+). Its function is as follows. Component of the PEX1-PEX6 AAA ATPase complex, a protein dislocase complex that mediates the ATP-dependent extraction of the PEX5 receptor from peroxisomal membranes, an essential step for PEX5 recycling. Specifically recognizes PEX5 monoubiquitinated at 'Cys-6', and pulls it out of the peroxisome lumen through the PEX2-PEX10-PEX12 retrotranslocation channel. Extraction by the PEX1-PEX6 AAA ATPase complex is accompanied by unfolding of the TPR repeats and release of bound cargo from PEX5. Regulates autophagy and biogenesis of peroxisomes and Woronin bodies. Plays important roles in mycelial growth and development and stress response. Is also essential for conidiation and fatty acid utilization. Required for nematode predation via trap formation. In Arthrobotrys oligospora (strain ATCC 24927 / CBS 115.81 / DSM 1491) (Nematode-trapping fungus), this protein is Peroxisomal ATPase PEX6.